The sequence spans 205 residues: Holliday junction branch migration complex subunit RuvA (205 aa).

Residues 1–64 (MIGKLKGTID…EDQLRLFGFL (64 aa)) are domain I. Residues 65–143 (SALEREWFRL…AFAGEMSASI (79 aa)) form a domain II region. The flexible linker stretch occupies residues 144–153 (GLKQELGEGV). The domain III stretch occupies residues 153–205 (VAAAPVSDAVSALTNLGYSRDQAANAVAAALKNGGEGGDSAKLIRLGLKELAR).

It belongs to the RuvA family. As to quaternary structure, homotetramer. Forms an RuvA(8)-RuvB(12)-Holliday junction (HJ) complex. HJ DNA is sandwiched between 2 RuvA tetramers; dsDNA enters through RuvA and exits via RuvB. An RuvB hexamer assembles on each DNA strand where it exits the tetramer. Each RuvB hexamer is contacted by two RuvA subunits (via domain III) on 2 adjacent RuvB subunits; this complex drives branch migration. In the full resolvosome a probable DNA-RuvA(4)-RuvB(12)-RuvC(2) complex forms which resolves the HJ.

Its subcellular location is the cytoplasm. In terms of biological role, the RuvA-RuvB-RuvC complex processes Holliday junction (HJ) DNA during genetic recombination and DNA repair, while the RuvA-RuvB complex plays an important role in the rescue of blocked DNA replication forks via replication fork reversal (RFR). RuvA specifically binds to HJ cruciform DNA, conferring on it an open structure. The RuvB hexamer acts as an ATP-dependent pump, pulling dsDNA into and through the RuvAB complex. HJ branch migration allows RuvC to scan DNA until it finds its consensus sequence, where it cleaves and resolves the cruciform DNA. This Sinorhizobium fredii (strain NBRC 101917 / NGR234) protein is Holliday junction branch migration complex subunit RuvA.